The chain runs to 108 residues: Replication initiation control protein YabA (108 aa).

The Zn(2+) site is built by His-82, Cys-84, Cys-98, and Cys-101.

It belongs to the YabA family. Homotetramer. Interacts with both DnaA and DnaN, acting as a bridge between these two proteins. It depends on Zn(2+) as a cofactor.

It is found in the cytoplasm. Its subcellular location is the nucleoid. Its function is as follows. Involved in control of chromosome replication initiation. Inhibits the cooperative binding of DnaA to the oriC region, thus negatively regulating initiation of chromosome replication. Inhibits the ability of DnaA-ATP to form a helix on DNA; does not disassemble preformed DnaA-DNA helices. Decreases the residence time of DnaA on the chromosome at its binding sites (oriC, replication forks and promoter-binding sites). Tethers DnaA to the replication machinery via the DNA polymerase beta sliding clamp subunit (dnaN). Associates with oriC and other DnaA targets on the chromosome in a DnaA-dependent manner. This is Replication initiation control protein YabA from Streptococcus agalactiae serotype Ia (strain ATCC 27591 / A909 / CDC SS700).